Consider the following 276-residue polypeptide: Plant cysteine oxidase 2 (276 aa).

Residues 1 to 40 (MGTDTVMSGRVRKDLSKTNPNGNIPENRSNSRKKIQRRSK) are disordered. A compositionally biased stretch (polar residues) spans 17–28 (KTNPNGNIPENR). The span at 30–40 (NSRKKIQRRSK) shows a compositional bias: basic residues. Fe cation is bound by residues His-134, His-136, and His-197.

The protein belongs to the cysteine dioxygenase family. Fe(2+) serves as cofactor.

The protein resides in the nucleus. Its subcellular location is the cytoplasm. It catalyses the reaction L-cysteine + O2 = 3-sulfino-L-alanine + H(+). Its function is as follows. Catalyzes the oxidation of N-terminal cysteine residues (N-Cys), thus preparing the protein for N-end rule pathway-mediated proteasomal degradation, upstream of the N-end rule enzymes ATE1, ATE2 and PRT6. Controls the preparation of the group VII ethylene response factor (ERF-VII) proteins for degradation via the 26S proteasome N-end rule pathway. Acts as an oxygen sensor that controls the stability of ERF-VII proteins, which are stabilized in flooding-induced hypoxia, and regulate transcriptional adaptation to these adverse conditions. Not active on Cys located inside or at the C-terminus of a peptide. Acts redundantly with PCO1 to repress the anaerobic response. This is Plant cysteine oxidase 2 from Arabidopsis thaliana (Mouse-ear cress).